A 766-amino-acid polypeptide reads, in one-letter code: Disabled homolog 2 (766 aa).

The segment covering 1-16 (MSNEVETSTTNGQPDQ) has biased composition (polar residues). Residues 1-36 (MSNEVETSTTNGQPDQQAAPKAPSKKEKKKGSEKTD) are disordered. Serine 2 is modified (N-acetylserine). Serine 2 is subject to Phosphoserine. In terms of domain architecture, PID spans 45–196 (GDGVKYKAKL…KAEENGSEAL (152 aa)). Tyrosine 170 is modified (phosphotyrosine). Position 193 is a phosphoserine (serine 193). Positions 230-447 (ESKDILLVDL…KPGRGRRTAK (218 aa)) are required for localization to clathrin-coated pits. Disordered regions lie at residues 284-482 (LNFF…NFLD), 596-630 (PPPT…LKDI), 659-683 (RQPP…FSSY), and 699-766 (DFDA…NPFA). Short sequence motifs (DPF) lie at residues 293-295 (DPF) and 298-300 (DPF). Composition is skewed to polar residues over residues 303-334 (PDQS…QSKG) and 367-381 (PSSQ…QNGV). Position 323 is a phosphoserine (serine 323). A phosphoserine; in mitosis mark is found at serine 326 and serine 328. Serine 401 bears the Phosphoserine mark. The segment covering 467–480 (MSPTGQPAVPQSNF) has biased composition (polar residues). Low complexity predominate over residues 600–612 (MSTQSSPQPMMSS). Positions 600–730 (MSTQSSPQPM…VLLGTKSADN (131 aa)) are sufficient for interaction with GRB2. The interval 617 to 625 (PPQPPPRNG) is required for interaction with CSK. A required for interaction with MYO6 region spans residues 647–766 (KEVKEMFKDF…HRSPFGNPFA (120 aa)). A required for interaction with GRB2 and CSK region spans residues 661–669 (PPLVPSRKG). Threonine 671 carries the phosphothreonine modification. A compositionally biased stretch (polar residues) spans 673-683 (PSGTSSAFSSY). The tract at residues 707-723 (NKINEPPKPAPRQGVLL) is sufficient for interaction with SH3KBP1 SH3 domain. Phosphoserine is present on residues serine 727 and serine 759. Residues 727–753 (SADNSLENPFSKGFSSSNPSVVSQPAS) are compositionally biased toward polar residues.

As to quaternary structure, interacts (via NPXY motif) with DAB2 (via PID domain). Can interact (via PID domain) with LDLR, APP, APLP1 and APLP2, and weakly with INPP5D (via NPXY motifs); the interaction is impaired by tyrosine phosphorylation of the respective NPXY motifs. Can weakly interact (via PID domain) with LRP1 (via NPXY motif); the interaction is enhanced by tyrosine phosphorylation of the NPXY motif. Interacts with LRP2 (via NPXY motif); the interaction is not affected by tyrosine phosphorylation of the NPXY motif. Interacts with clathrin; in vitro can assemble clathrin triskelia into polyhedral coats. Interacts with AP2A2, ITGB1, ITGB3, ITGB5, PIAS2, DAB2IP, NOSTRIN, FCHO1, DVL3 and EPS15L1. Interacts with SH3KBP1 (via SH3 domains). Interacts with GRB2; competes with SOS1 for binding to GRB2 and the interaction is enhanced by EGF and NT-3 stimulation. Isoform p96 interacts with EPS15 and ITSN1; isoform p67 does not interact with EPS15 and only weakly interacts with ITSN1. Interacts with MAP3K7; the interaction is induced by TGF-beta stimulation and may mediate TGF-beta stimulated JNK activation. Interacts with AXIN1 and PPP1CA; the interactions are mutually exclusive. Interacts with the globular tail of MYO6. Interacts (via DPF motifs) with FCHO2; the interaction is direct and required for DAB2-mediated LDLR endocytosis. Interacts with LRP6; the interaction involves LRP6 phosphorylation by CK2 and sequesters LRP6 towards clathrin-mediated endocytosis. Associates with the TGF-beta receptor complex. Interacts with SMAD2 and SMAD3; the interactions are enhanced upon TGF-beta stimulation. Interacts with GRB2; the interaction is enhanced by EGF and NT-3 stimulation. Interacts with SRC; the interaction is enhanced by EGF stimulation. Phosphorylated on serine residues in response to mitogenic growth-factor stimulation. Phosphorylation during mitosis is leading to membrane displacement. As to expression, isoform p96 and isoform p67 are expressed in adult kidney and fibroblasts with isoform p96 being the predominant form. Isoform p67 is the predominant isoform expressed in embryonic visceral endoderm.

The protein resides in the cytoplasmic vesicle. Its subcellular location is the clathrin-coated vesicle membrane. It is found in the membrane. It localises to the clathrin-coated pit. The protein localises to the cytoplasm. The protein resides in the nucleus. Its function is as follows. Adapter protein that functions as a clathrin-associated sorting protein (CLASP) required for clathrin-mediated endocytosis of selected cargo proteins. Can bind and assemble clathrin, and binds simultaneously to phosphatidylinositol 4,5-bisphosphate (PtdIns(4,5)P2) and cargos containing non-phosphorylated NPXY internalization motifs, such as the LDL receptor, to recruit them to clathrin-coated pits. Can function in clathrin-mediated endocytosis independently of the AP-2 complex. Involved in endocytosis of integrin beta-1; this function seems to redundant with the AP-2 complex and seems to require DAB2 binding to endocytosis accessory EH domain-containing proteins such as EPS15, EPS15L1 and ITSN1. Involved in endocytosis of cystic fibrosis transmembrane conductance regulator/CFTR. Isoform p96 is involved in endocytosis of megalin/LRP2 lipoprotein receptor during embryonal development. Required for recycling of the TGF-beta receptor. Isoform p67 is not involved in LDL receptor endocytosis. Involved in CFTR trafficking to the late endosome. Involved in several receptor-mediated signaling pathways. Involved in TGF-beta receptor signaling and facilitates phosphorylation of the signal transducer SMAD2. Mediates TFG-beta-stimulated JNK activation. May inhibit the canoniocal Wnt/beta-catenin signaling pathway by stabilizing the beta-catenin destruction complex through a competing association with axin preventing its dephosphorylation through protein phosphatase 1 (PP1). Sequesters LRP6 towards clathrin-mediated endocytosis, leading to inhibition of Wnt/beta-catenin signaling. May activate non-canonical Wnt signaling. In cell surface growth factor/Ras signaling pathways proposed to inhibit ERK activation by interrupting the binding of GRB2 to SOS1 and to inhibit SRC by preventing its activating phosphorylation at 'Tyr-419'. Proposed to be involved in modulation of androgen receptor (AR) signaling mediated by SRC activation; seems to compete with AR for interaction with SRC. Plays a role in the CSF-1 signal transduction pathway. Plays a role in cellular differentiation. Involved in cell positioning and formation of visceral endoderm (VE) during embryogenesis and proposed to be required in the VE to respond to Nodal signaling coming from the epiblast. Required for the epithelial to mesenchymal transition, a process necessary for proper embryonic development. May be involved in myeloid cell differentiation and can induce macrophage adhesion and spreading. Isoform p67 may be involved in transcriptional regulation. May act as a tumor suppressor. The sequence is that of Disabled homolog 2 (Dab2) from Mus musculus (Mouse).